The primary structure comprises 238 residues: Ribonuclease PH (238 aa).

Phosphate contacts are provided by residues R86 and 124–126 (GTR).

It belongs to the RNase PH family. Homohexameric ring arranged as a trimer of dimers.

The catalysed reaction is tRNA(n+1) + phosphate = tRNA(n) + a ribonucleoside 5'-diphosphate. Phosphorolytic 3'-5' exoribonuclease that plays an important role in tRNA 3'-end maturation. Removes nucleotide residues following the 3'-CCA terminus of tRNAs; can also add nucleotides to the ends of RNA molecules by using nucleoside diphosphates as substrates, but this may not be physiologically important. Probably plays a role in initiation of 16S rRNA degradation (leading to ribosome degradation) during starvation. The chain is Ribonuclease PH from Actinobacillus succinogenes (strain ATCC 55618 / DSM 22257 / CCUG 43843 / 130Z).